The following is a 384-amino-acid chain: 5-amino-6-(D-ribitylamino)uracil--L-tyrosine 4-hydroxyphenyl transferase 2 (384 aa).

The Radical SAM core domain maps to 53-286; sequence VSYVVNRNIY…IAISRIILHT (234 aa). 3 residues coordinate [4Fe-4S] cluster: Cys67, Cys71, and Cys74.

It belongs to the radical SAM superfamily. CofH family. In terms of assembly, consists of two subunits, CofG and CofH. The cofactor is [4Fe-4S] cluster.

The catalysed reaction is 5-amino-6-(D-ribitylamino)uracil + L-tyrosine + S-adenosyl-L-methionine = 5-amino-5-(4-hydroxybenzyl)-6-(D-ribitylimino)-5,6-dihydrouracil + 2-iminoacetate + 5'-deoxyadenosine + L-methionine + H(+). It functions in the pathway cofactor biosynthesis; coenzyme F0 biosynthesis. Its function is as follows. Catalyzes the radical-mediated synthesis of 5-amino-5-(4-hydroxybenzyl)-6-(D-ribitylimino)-5,6-dihydrouracil from 5-amino-6-(D-ribitylamino)uracil and L-tyrosine. This Methanosarcina acetivorans (strain ATCC 35395 / DSM 2834 / JCM 12185 / C2A) protein is 5-amino-6-(D-ribitylamino)uracil--L-tyrosine 4-hydroxyphenyl transferase 2.